We begin with the raw amino-acid sequence, 124 residues long: Small ribosomal subunit protein uS13 (124 aa).

The interval G95–R124 is disordered.

The protein belongs to the universal ribosomal protein uS13 family. As to quaternary structure, part of the 30S ribosomal subunit. Forms a loose heterodimer with protein S19. Forms two bridges to the 50S subunit in the 70S ribosome.

Located at the top of the head of the 30S subunit, it contacts several helices of the 16S rRNA. In the 70S ribosome it contacts the 23S rRNA (bridge B1a) and protein L5 of the 50S subunit (bridge B1b), connecting the 2 subunits; these bridges are implicated in subunit movement. Contacts the tRNAs in the A and P-sites. The chain is Small ribosomal subunit protein uS13 from Mycobacteroides abscessus (strain ATCC 19977 / DSM 44196 / CCUG 20993 / CIP 104536 / JCM 13569 / NCTC 13031 / TMC 1543 / L948) (Mycobacterium abscessus).